The following is a 1093-amino-acid chain: Semaphorin-5B (1093 aa).

Residues 1-19 (MVVPGPLALSLLLSSLTLL) form the signal peptide. At 20–978 (VSHLSSSQDI…TSCGGFNLIH (959 aa)) the chain is on the extracellular side. In terms of domain architecture, Sema spans 45-495 (HPIVAFEDLK…LSDRVLRVPL (451 aa)). N-linked (GlcNAc...) asparagine glycosylation is found at N59 and N95. Intrachain disulfides connect C114–C124 and C141–C150. N-linked (GlcNAc...) asparagine glycans are attached at residues N157, N178, and N287. 2 cysteine pairs are disulfide-bonded: C264–C367 and C288–C330. N-linked (GlcNAc...) asparagine glycans are attached at residues N333, N378, N532, N539, N547, and N602. TSP type-1 domains follow at residues 551–605 (DGGF…NCSR), 606–662 (NGAW…TPCP), 664–713 (PIFW…EACP), 721–776 (WTPW…ACDT), 795–850 (NGGW…QACP), 852–907 (RGAW…QACP), and 908–952 (EGWS…RPCP). 6 cysteine pairs are disulfide-bonded: C618/C655, C622/C661, C633/C645, C676/C707, C680/C712, and C691/C697. A glycan (N-linked (GlcNAc...) asparagine) is linked at N728. Intrachain disulfides connect C807–C844, C811–C849, C822–C834, C864–C901, C868–C906, and C879–C891. An N-linked (GlcNAc...) asparagine glycan is attached at N944. A helical transmembrane segment spans residues 979–999 (LIVTGVSCFLVSGLLTLAVYL). Residues 1000 to 1093 (SCQHCQRQSQ…SPGQRCFPNS (94 aa)) are Cytoplasmic-facing.

It belongs to the semaphorin family. In adult, only detected in brain.

Its subcellular location is the membrane. In terms of biological role, may act as a positive axonal guidance cue. The chain is Semaphorin-5B (Sema5b) from Mus musculus (Mouse).